Consider the following 241-residue polypeptide: Phosphoribosylformylglycinamidine synthase subunit PurQ (241 aa).

The region spanning 6–241 (NVGIVVFPGS…QSLLLASAFA (236 aa)) is the Glutamine amidotransferase type-1 domain. The active-site Nucleophile is Cys90. Catalysis depends on residues His207 and Glu209.

In terms of assembly, part of the FGAM synthase complex composed of 1 PurL, 1 PurQ and 2 PurS subunits.

It is found in the cytoplasm. It carries out the reaction N(2)-formyl-N(1)-(5-phospho-beta-D-ribosyl)glycinamide + L-glutamine + ATP + H2O = 2-formamido-N(1)-(5-O-phospho-beta-D-ribosyl)acetamidine + L-glutamate + ADP + phosphate + H(+). It catalyses the reaction L-glutamine + H2O = L-glutamate + NH4(+). The protein operates within purine metabolism; IMP biosynthesis via de novo pathway; 5-amino-1-(5-phospho-D-ribosyl)imidazole from N(2)-formyl-N(1)-(5-phospho-D-ribosyl)glycinamide: step 1/2. Part of the phosphoribosylformylglycinamidine synthase complex involved in the purines biosynthetic pathway. Catalyzes the ATP-dependent conversion of formylglycinamide ribonucleotide (FGAR) and glutamine to yield formylglycinamidine ribonucleotide (FGAM) and glutamate. The FGAM synthase complex is composed of three subunits. PurQ produces an ammonia molecule by converting glutamine to glutamate. PurL transfers the ammonia molecule to FGAR to form FGAM in an ATP-dependent manner. PurS interacts with PurQ and PurL and is thought to assist in the transfer of the ammonia molecule from PurQ to PurL. The polypeptide is Phosphoribosylformylglycinamidine synthase subunit PurQ (Thermosynechococcus vestitus (strain NIES-2133 / IAM M-273 / BP-1)).